Consider the following 205-residue polypeptide: uncharacterized protein (205 aa).

Residues 72–114 are disordered; that stretch reads ARVSPYGYESDSENEEYTRISSATSSNVLTDSPTTTQDDPTGR. The segment covering 90 to 100 has biased composition (polar residues); sequence RISSATSSNVL. The span at 101 to 110 shows a compositional bias: low complexity; it reads TDSPTTTQDD.

This is an uncharacterized protein from Equus caballus (Horse).